Here is a 312-residue protein sequence, read N- to C-terminus: Protein dif-1 (312 aa).

Solcar repeat units lie at residues 2-93 (SDVL…GKWL), 102-193 (MTFI…LKKK), and 203-289 (LSPG…TLAA). Helical transmembrane passes span 5–25 (LLNFIAGGVGGSCTVIVGHPF), 69–89 (MAAPLVGVSPLFAVFFGGCAV), 104–124 (FIQNANAGALAGVFTTIVMVP), 172–192 (TLLRDIPASAAYLSVYEYLKK), 209–229 (LMAGGLAGIANWGVCIPADVL), and 261–282 (LFKGFWPVMLRAFPANAACFFG).

The protein belongs to the mitochondrial carrier (TC 2.A.29) family.

The protein localises to the mitochondrion inner membrane. Seems to play a role in the maintenance of tissue differentiation in the developing embryo, but not for its initiation. In Caenorhabditis elegans, this protein is Protein dif-1 (dif-1).